The primary structure comprises 101 residues: Small ribosomal subunit protein uS14 (101 aa).

The segment covering 1 to 10 has biased composition (basic and acidic residues); the sequence is MAKKSSIEKN. The interval 1 to 23 is disordered; that stretch reads MAKKSSIEKNNRRKKMTKNAAPK. Residues 11–23 show a composition bias toward basic residues; sequence NRRKKMTKNAAPK.

The protein belongs to the universal ribosomal protein uS14 family. Part of the 30S ribosomal subunit. Contacts proteins S3 and S10.

In terms of biological role, binds 16S rRNA, required for the assembly of 30S particles and may also be responsible for determining the conformation of the 16S rRNA at the A site. The chain is Small ribosomal subunit protein uS14 from Rhodopseudomonas palustris (strain HaA2).